The following is a 228-amino-acid chain: uncharacterized protein (228 aa).

This is an uncharacterized protein from Ictalurid herpesvirus 1 (strain Auburn) (IcHV-1).